Reading from the N-terminus, the 132-residue chain is Small ribosomal subunit protein uS8 (132 aa).

Belongs to the universal ribosomal protein uS8 family. Part of the 30S ribosomal subunit. Contacts proteins S5 and S12.

In terms of biological role, one of the primary rRNA binding proteins, it binds directly to 16S rRNA central domain where it helps coordinate assembly of the platform of the 30S subunit. The polypeptide is Small ribosomal subunit protein uS8 (Stenotrophomonas maltophilia (strain K279a)).